A 377-amino-acid chain; its full sequence is uncharacterized protein (377 aa).

Residues 345-377 form a disordered region; that stretch reads VGPSPPAYEQVARSSPTDIPLPPPSCPTNVQRD.

This is an uncharacterized protein from Schizosaccharomyces pombe (strain 972 / ATCC 24843) (Fission yeast).